The sequence spans 307 residues: tRNA dimethylallyltransferase 1 (307 aa).

An ATP-binding site is contributed by 11–18 (GPTASGKT). 13-18 (TASGKT) provides a ligand contact to substrate. Interaction with substrate tRNA stretches follow at residues 36–39 (DSRQ) and 159–163 (QRAIR).

This sequence belongs to the IPP transferase family. As to quaternary structure, monomer. It depends on Mg(2+) as a cofactor.

It catalyses the reaction adenosine(37) in tRNA + dimethylallyl diphosphate = N(6)-dimethylallyladenosine(37) in tRNA + diphosphate. Functionally, catalyzes the transfer of a dimethylallyl group onto the adenine at position 37 in tRNAs that read codons beginning with uridine, leading to the formation of N6-(dimethylallyl)adenosine (i(6)A). The chain is tRNA dimethylallyltransferase 1 from Parabacteroides distasonis (strain ATCC 8503 / DSM 20701 / CIP 104284 / JCM 5825 / NCTC 11152).